Reading from the N-terminus, the 96-residue chain is Protein YddL (96 aa).

Positions 1–21 (MKLKIVAVVVTGLLAANVAHA) are cleaved as a signal peptide.

The chain is Protein YddL (yddL) from Escherichia coli (strain K12).